Consider the following 515-residue polypeptide: Bifunctional purine biosynthesis protein PurH (515 aa).

Residues 1-145 (MTKRVLISVS…KNHASVTVVV (145 aa)) form the MGS-like domain.

This sequence belongs to the PurH family.

It carries out the reaction (6R)-10-formyltetrahydrofolate + 5-amino-1-(5-phospho-beta-D-ribosyl)imidazole-4-carboxamide = 5-formamido-1-(5-phospho-D-ribosyl)imidazole-4-carboxamide + (6S)-5,6,7,8-tetrahydrofolate. It catalyses the reaction IMP + H2O = 5-formamido-1-(5-phospho-D-ribosyl)imidazole-4-carboxamide. It functions in the pathway purine metabolism; IMP biosynthesis via de novo pathway; 5-formamido-1-(5-phospho-D-ribosyl)imidazole-4-carboxamide from 5-amino-1-(5-phospho-D-ribosyl)imidazole-4-carboxamide (10-formyl THF route): step 1/1. The protein operates within purine metabolism; IMP biosynthesis via de novo pathway; IMP from 5-formamido-1-(5-phospho-D-ribosyl)imidazole-4-carboxamide: step 1/1. The polypeptide is Bifunctional purine biosynthesis protein PurH (Streptococcus pneumoniae (strain P1031)).